Consider the following 271-residue polypeptide: Catechol O-methyltransferase (271 aa).

The Cytoplasmic portion of the chain corresponds to 1-6 (MPEAPP). The chain crosses the membrane as a helical; Signal-anchor for type II membrane protein span at residues 7–26 (LLLAAVLLGLVLLVVLLLLL). The Extracellular segment spans residues 27–271 (RHWGWGLCLI…YKGPGSEAGP (245 aa)). Residues valine 92, glutamate 114, serine 122, glutamate 140, isoleucine 141, 167 to 170 (GASQ), serine 169, and aspartate 191 contribute to the S-adenosyl-L-methionine site. Aspartate 191 serves as a coordination point for Mg(2+). Lysine 194 contacts substrate. Residues aspartate 219 and asparagine 220 each coordinate Mg(2+). 2 residues coordinate substrate: asparagine 220 and glutamate 249. Serine 267 bears the Phosphoserine mark.

The protein belongs to the class I-like SAM-binding methyltransferase superfamily. Cation-dependent O-methyltransferase family. Mg(2+) serves as cofactor. The N-terminus is blocked. Brain, liver, placenta, lymphocytes and erythrocytes.

It localises to the cytoplasm. Its subcellular location is the cell membrane. It carries out the reaction a catechol + S-adenosyl-L-methionine = a guaiacol + S-adenosyl-L-homocysteine + H(+). The catalysed reaction is 2-hydroxyestrone + S-adenosyl-L-methionine = 2-hydroxy-3-methoxy-estrone + S-adenosyl-L-homocysteine + H(+). The enzyme catalyses 4-hydroxyestrone + S-adenosyl-L-methionine = 4-methoxyestrone + S-adenosyl-L-homocysteine + H(+). It catalyses the reaction 2-hydroxyestrone + S-adenosyl-L-methionine = 2-methoxyestrone + S-adenosyl-L-homocysteine + H(+). It carries out the reaction 4-hydroxy-17beta-estradiol + S-adenosyl-L-methionine = 4-methoxy-17beta-estradiol + S-adenosyl-L-homocysteine + H(+). The catalysed reaction is 2-hydroxy-17beta-estradiol + S-adenosyl-L-methionine = 2-hydroxy-3-methoxy-17beta-estradiol + S-adenosyl-L-homocysteine + H(+). The enzyme catalyses 2-hydroxy-17beta-estradiol + S-adenosyl-L-methionine = 2-methoxy-17beta-estradiol + S-adenosyl-L-homocysteine + H(+). Functionally, catalyzes the O-methylation, and thereby the inactivation, of catecholamine neurotransmitters and catechol hormones. Also shortens the biological half-lives of certain neuroactive drugs, like L-DOPA, alpha-methyl DOPA and isoproterenol. The protein is Catechol O-methyltransferase of Homo sapiens (Human).